The sequence spans 279 residues: Undecaprenyl-diphosphatase (279 aa).

Helical transmembrane passes span 2–22 (LFIE…TEWL), 44–64 (AFME…VIVI), 85–105 (WQLW…AVPL), 113–133 (FNHM…FLWI), 163–183 (VLSI…AIIL), 188–208 (TVAA…YSGL), 225–245 (LLVL…VIKL), and 255–275 (FTVF…YSVF).

This sequence belongs to the UppP family.

The protein localises to the cell membrane. It catalyses the reaction di-trans,octa-cis-undecaprenyl diphosphate + H2O = di-trans,octa-cis-undecaprenyl phosphate + phosphate + H(+). In terms of biological role, catalyzes the dephosphorylation of undecaprenyl diphosphate (UPP). Confers resistance to bacitracin. This chain is Undecaprenyl-diphosphatase, found in Streptococcus equi subsp. equi (strain 4047).